Reading from the N-terminus, the 124-residue chain is Phosphoribosyl-AMP cyclohydrolase (124 aa).

Residue D82 participates in Mg(2+) binding. Residue C83 coordinates Zn(2+). Positions 84 and 86 each coordinate Mg(2+). The Zn(2+) site is built by C99 and C106.

Belongs to the PRA-CH family. Homodimer. It depends on Mg(2+) as a cofactor. The cofactor is Zn(2+).

The protein localises to the cytoplasm. The enzyme catalyses 1-(5-phospho-beta-D-ribosyl)-5'-AMP + H2O = 1-(5-phospho-beta-D-ribosyl)-5-[(5-phospho-beta-D-ribosylamino)methylideneamino]imidazole-4-carboxamide. The protein operates within amino-acid biosynthesis; L-histidine biosynthesis; L-histidine from 5-phospho-alpha-D-ribose 1-diphosphate: step 3/9. Catalyzes the hydrolysis of the adenine ring of phosphoribosyl-AMP. The sequence is that of Phosphoribosyl-AMP cyclohydrolase from Zymomonas mobilis subsp. mobilis (strain ATCC 31821 / ZM4 / CP4).